Reading from the N-terminus, the 226-residue chain is Low-molecular weight cobalt-containing nitrile hydratase subunit beta (226 aa).

A disordered region spans residues 1–22 (MDGIHDLGGRAGLGPIKPESDE).

It belongs to the nitrile hydratase subunit beta family. Heterodimer of an alpha and a beta chain.

It carries out the reaction an aliphatic primary amide = an aliphatic nitrile + H2O. In terms of biological role, NHase catalyzes the hydration of various nitrile compounds to the corresponding amides. The sequence is that of Low-molecular weight cobalt-containing nitrile hydratase subunit beta from Rhodococcus rhodochrous.